A 215-amino-acid chain; its full sequence is Pyrophosphatase PpaX (215 aa).

Asp9 acts as the Nucleophile in catalysis.

Belongs to the HAD-like hydrolase superfamily. PpaX family. Mg(2+) serves as cofactor.

It carries out the reaction diphosphate + H2O = 2 phosphate + H(+). Functionally, hydrolyzes pyrophosphate formed during P-Ser-HPr dephosphorylation by HPrK/P. Might play a role in controlling the intracellular pyrophosphate pool. This Bacillus mycoides (strain KBAB4) (Bacillus weihenstephanensis) protein is Pyrophosphatase PpaX.